A 100-amino-acid polypeptide reads, in one-letter code: MHFTQREQDKLMLVIAADLARRRQQRGLKLNYPEAVAIISFELLEGARDGKTVAELMSYGKQILNEDDVMEGVADMLTEMEIEATFPDGTKLITVHHPIV.

The protein belongs to the urease gamma subunit family. As to quaternary structure, heterotrimer of UreA (gamma), UreB (beta) and UreC (alpha) subunits. Three heterotrimers associate to form the active enzyme.

It is found in the cytoplasm. It catalyses the reaction urea + 2 H2O + H(+) = hydrogencarbonate + 2 NH4(+). It participates in nitrogen metabolism; urea degradation; CO(2) and NH(3) from urea (urease route): step 1/1. This chain is Urease subunit gamma, found in Staphylococcus saprophyticus subsp. saprophyticus (strain ATCC 15305 / DSM 20229 / NCIMB 8711 / NCTC 7292 / S-41).